We begin with the raw amino-acid sequence, 407 residues long: Multifunctional CCA protein (407 aa).

Gly8 and Arg11 together coordinate ATP. Residues Gly8 and Arg11 each coordinate CTP. The Mg(2+) site is built by Asp21 and Asp23. ATP-binding residues include Arg91, Arg137, and Arg140. CTP contacts are provided by Arg91, Arg137, and Arg140. One can recognise an HD domain in the interval 228-329 (TGMHTLMVSQ…IKIFDKMDLW (102 aa)).

Belongs to the tRNA nucleotidyltransferase/poly(A) polymerase family. Bacterial CCA-adding enzyme type 1 subfamily. Monomer. Can also form homodimers and oligomers. It depends on Mg(2+) as a cofactor. Requires Ni(2+) as cofactor.

It catalyses the reaction a tRNA precursor + 2 CTP + ATP = a tRNA with a 3' CCA end + 3 diphosphate. The catalysed reaction is a tRNA with a 3' CCA end + 2 CTP + ATP = a tRNA with a 3' CCACCA end + 3 diphosphate. Catalyzes the addition and repair of the essential 3'-terminal CCA sequence in tRNAs without using a nucleic acid template. Adds these three nucleotides in the order of C, C, and A to the tRNA nucleotide-73, using CTP and ATP as substrates and producing inorganic pyrophosphate. tRNA 3'-terminal CCA addition is required both for tRNA processing and repair. Also involved in tRNA surveillance by mediating tandem CCA addition to generate a CCACCA at the 3' terminus of unstable tRNAs. While stable tRNAs receive only 3'-terminal CCA, unstable tRNAs are marked with CCACCA and rapidly degraded. This is Multifunctional CCA protein from Aliivibrio salmonicida (strain LFI1238) (Vibrio salmonicida (strain LFI1238)).